A 159-amino-acid chain; its full sequence is Large ribosomal subunit protein uL11 (159 aa).

Belongs to the universal ribosomal protein uL11 family. In terms of assembly, part of the ribosomal stalk of the 50S ribosomal subunit. Interacts with L10 and the large rRNA to form the base of the stalk. L10 forms an elongated spine to which L12 dimers bind in a sequential fashion forming a multimeric L10(L12)X complex.

Forms part of the ribosomal stalk which helps the ribosome interact with GTP-bound translation factors. The polypeptide is Large ribosomal subunit protein uL11 (Methanococcus maripaludis (strain DSM 14266 / JCM 13030 / NBRC 101832 / S2 / LL)).